A 98-amino-acid chain; its full sequence is NADH-ubiquinone oxidoreductase chain 4L (98 aa).

Helical transmembrane passes span 1-21 (MSMVYINIFLAFIMSLMGLLM), 29-49 (SLLCLEGMMLSLFIMMTMVVL), and 61-81 (IILLVFAACEAALGLSLLVMV).

This sequence belongs to the complex I subunit 4L family. Core subunit of respiratory chain NADH dehydrogenase (Complex I) which is composed of 45 different subunits.

The protein resides in the mitochondrion inner membrane. It catalyses the reaction a ubiquinone + NADH + 5 H(+)(in) = a ubiquinol + NAD(+) + 4 H(+)(out). Core subunit of the mitochondrial membrane respiratory chain NADH dehydrogenase (Complex I) which catalyzes electron transfer from NADH through the respiratory chain, using ubiquinone as an electron acceptor. Part of the enzyme membrane arm which is embedded in the lipid bilayer and involved in proton translocation. The chain is NADH-ubiquinone oxidoreductase chain 4L (MT-ND4L) from Acinonyx jubatus (Cheetah).